A 181-amino-acid polypeptide reads, in one-letter code: GTPase RhebL1 (181 aa).

Residues 30–36, Gly61, 117–120, and 147–148 each bind GTP; these read LEDYDPT, NKAD, and SA. The short motif at 33–41 is the Effector region element; it reads YDPTVENTY. Thr36 is a Mg(2+) binding site. Cys178 is subject to Cysteine methyl ester. Cys178 carries the S-farnesyl cysteine lipid modification. Positions 179-181 are cleaved as a propeptide — removed in mature form; it reads HLM.

The protein belongs to the small GTPase superfamily. Rheb family. In terms of assembly, interacts with MTOR.

It localises to the endomembrane system. It is found in the cytoplasm. It carries out the reaction GTP + H2O = GDP + phosphate + H(+). Its function is as follows. Binds GTP and exhibits intrinsic GTPase activity. May activate NF-kappa-B-mediated gene transcription. Promotes signal transduction through MTOR, activates RPS6KB1, and is a downstream target of the small GTPase-activating proteins TSC1 and TSC2. The protein is GTPase RhebL1 (RHEBL1) of Bos taurus (Bovine).